Consider the following 720-residue polypeptide: Chloroplastic group IIA intron splicing facilitator CRS1, chloroplastic (720 aa).

The transit peptide at Met1 to Ser77 directs the protein to the chloroplast. Residues Lys131–Glu159 adopt a coiled-coil conformation. CRM domains lie at Leu205–Asp301 and Ala359–Asp456. Coiled-coil stretches lie at residues Lys447 to Glu477 and Arg517 to Leu553. One can recognise a CRM 3 domain in the interval Glu570 to Leu670.

Homodimer. Interacts with RNA. Part of large ribonucleo-protein complexes that include group IIA introns and CRS1.

Its subcellular location is the plastid. The protein localises to the chloroplast stroma. Functionally, required for the splicing of group IIA introns in chloroplasts, by regulating the intron folding. Forms splicing particles with RNA. May also be involved in chloroplast protein translation. The polypeptide is Chloroplastic group IIA intron splicing facilitator CRS1, chloroplastic (Arabidopsis thaliana (Mouse-ear cress)).